We begin with the raw amino-acid sequence, 276 residues long: Shikimate dehydrogenase (NADP(+)) (276 aa).

Residues 15-17 and threonine 62 each bind shikimate; that span reads SLS. Residue lysine 66 is the Proton acceptor of the active site. Residue glutamate 78 participates in NADP(+) binding. Shikimate-binding residues include asparagine 87 and aspartate 102. NADP(+)-binding positions include 151–156 and isoleucine 218; that span reads NRTVEK. Tyrosine 220 provides a ligand contact to shikimate. Glycine 241 contacts NADP(+).

Belongs to the shikimate dehydrogenase family. As to quaternary structure, homodimer.

The enzyme catalyses shikimate + NADP(+) = 3-dehydroshikimate + NADPH + H(+). It participates in metabolic intermediate biosynthesis; chorismate biosynthesis; chorismate from D-erythrose 4-phosphate and phosphoenolpyruvate: step 4/7. Functionally, involved in the biosynthesis of the chorismate, which leads to the biosynthesis of aromatic amino acids. Catalyzes the reversible NADPH linked reduction of 3-dehydroshikimate (DHSA) to yield shikimate (SA). In Geobacillus kaustophilus (strain HTA426), this protein is Shikimate dehydrogenase (NADP(+)).